The sequence spans 548 residues: Tau-cadinol synthase (548 aa).

Mg(2+) contacts are provided by D303 and D307. Residues D303, D307, and R443 each contribute to the substrate site. The DDXXD motif motif lies at 303–307 (DDTYD).

This sequence belongs to the terpene synthase family. Monomer. Mg(2+) serves as cofactor. Requires Mn(2+) as cofactor. In terms of tissue distribution, constitutively expressed in aerial tissues, but barely observed in roots.

It is found in the cytoplasm. It catalyses the reaction (2E,6E)-farnesyl diphosphate + H2O = tau-cadinol + diphosphate. The protein operates within secondary metabolite biosynthesis; terpenoid biosynthesis. Its function is as follows. Sesquiterpene synthase that catalyzes the formation of a blend of sesquiterpenes and sesquiterpenoid alcohols. Converts farnesyl diphosphate to tau-cadinol. This is Tau-cadinol synthase from Zea mays (Maize).